The primary structure comprises 905 residues: MLSPFDWRRGISSSGTGGTMAAQPLSSTAATTAAATGATAATAATAATTSATLSTAAASTSTTAAPSAGATWINHHLAVEADSSQPANGSDAQAGVEGPTMPAGYLPLYEDVETAAEDAGYALIDDISEWLLGSVGSEAAVGGPENSTNLAVTGANGTLAWLEALNSTQPAQSNSSAEDGERGRYSLRSFVEQQLAGGGAAGAGDGGDAGIALIDSGEEAALDNVADAETDYGMLGGFGDAELLQRTATVARETLGNRTAPSTTSYDGGGSGDVGVAGGLAGTAGGGVGGAGGSGGSTFMLLLENFNDYFPNYNGSTVSGTSTIAPGVAITGSRGSGLLLEQNLTGLYLDGYRLNCTNETLNLTDSCGELRVVDHNYWALILILFPILTLFGNILVILSVCRERSLQTVTNYFIVSLAIADLLVAVVVMPFAVYFLVNGAWALPDVVCDFYIAMDVICSTSSIFNLVAISIDRYIAVTQPIKYAKHKNSRRVCLTILLVWAISAAIGSPIVLGLNNTPNREPDVCAFYNADFILYSSLSSFYIPCIIMVFLYWNIFKALRSRARKQRAARKPHLSELTGGSVIENIAQTRRLAETALDSSRHASRILPDEAATNTASGSNEEEDENAISPDIDDCHVIVNDKSTEFMLATVVEETGNSVVAQITTQPQLVVADPNGNHDSGYAASNVDDVLAGVAPASASAATSAAPRSSGSPPDSPLPSGATLQRSSVSSQRRPTGDDSPKRGEPALRSVGVDNSSVAMKPLSFVRYGVQEAMTLARNDSTLSTTSKTSSRKDKKNSQASRFTIYKVHKASKKKREKSSAKKERKATKTLAIVLGVFLFCWLPFFSCNIMDAMCAKFKKDCRPGLTAYMMTTWLGYINSFVNPVIYTIFNPEFRKAFKKIMHMG.

A disordered region spans residues 1–23 (MLSPFDWRRGISSSGTGGTMAAQ). The Extracellular segment spans residues 1 to 377 (MLSPFDWRRG…GELRVVDHNY (377 aa)). Asn-88, Asn-146, Asn-156, Asn-166, Asn-174, Asn-257, Asn-314, and Asn-343 each carry an N-linked (GlcNAc...) asparagine glycan. The chain crosses the membrane as a helical span at residues 378 to 398 (WALILILFPILTLFGNILVIL). The Cytoplasmic portion of the chain corresponds to 399-416 (SVCRERSLQTVTNYFIVS). The helical transmembrane segment at 417–437 (LAIADLLVAVVVMPFAVYFLV) threads the bilayer. At 438–450 (NGAWALPDVVCDF) the chain is on the extracellular side. Cys-448 and Cys-525 form a disulfide bridge. A helical membrane pass occupies residues 451 to 471 (YIAMDVICSTSSIFNLVAISI). At 472-493 (DRYIAVTQPIKYAKHKNSRRVC) the chain is on the cytoplasmic side. The chain crosses the membrane as a helical span at residues 494 to 514 (LTILLVWAISAAIGSPIVLGL). At 515–531 (NNTPNREPDVCAFYNAD) the chain is on the extracellular side. The helical transmembrane segment at 532 to 552 (FILYSSLSSFYIPCIIMVFLY) threads the bilayer. Residues 553-830 (WNIFKALRSR…AKKERKATKT (278 aa)) are Cytoplasmic-facing. Disordered regions lie at residues 600 to 631 (SRHA…ISPD), 702 to 753 (ATSA…SVGV), and 780 to 799 (DSTL…KNSQ). Residues 702-722 (ATSAAPRSSGSPPDSPLPSGA) show a composition bias toward low complexity. A compositionally biased stretch (polar residues) spans 723–734 (TLQRSSVSSQRR). Over residues 735–746 (PTGDDSPKRGEP) the composition is skewed to basic and acidic residues. Residues 831-851 (LAIVLGVFLFCWLPFFSCNIM) traverse the membrane as a helical segment. At 852–869 (DAMCAKFKKDCRPGLTAY) the chain is on the extracellular side. Residues 870–890 (MMTTWLGYINSFVNPVIYTIF) traverse the membrane as a helical segment. Residues 891-905 (NPEFRKAFKKIMHMG) are Cytoplasmic-facing.

It belongs to the G-protein coupled receptor 1 family. Highest expression is in adult heads.

It localises to the cell membrane. Its function is as follows. Receptor for dopamine. The activity of this receptor is mediated by G proteins which inhibit adenylyl cyclase. This is Dopamine D2-like receptor from Drosophila melanogaster (Fruit fly).